Here is a 156-residue protein sequence, read N- to C-terminus: RNA polymerase sigma factor SigS (156 aa).

A Polymerase core binding motif is present at residues 29 to 44 (EYYQLLLIKMWQLSQI). A DNA-binding region (H-T-H motif) is located at residues 126 to 145 (QFEIAEIMSLSLSTIKLIKM).

Belongs to the sigma-70 factor family.

Sigma factors are initiation factors that promote the attachment of RNA polymerase to specific initiation sites and are then released. Sigma-S contributes to the protection against external stress, thus playing a role in cellular fitness and survival. This Staphylococcus aureus (strain NCTC 8325 / PS 47) protein is RNA polymerase sigma factor SigS (sigS).